Here is a 356-residue protein sequence, read N- to C-terminus: Fructose-1,6-bisphosphatase class 1 1 (356 aa).

Mg(2+) is bound by residues Glu-106, Asp-129, Leu-131, and Asp-132. Residues 132–135 (DGSS), Asn-225, Tyr-258, and Lys-288 each bind substrate. Residue Glu-294 coordinates Mg(2+).

Belongs to the FBPase class 1 family. In terms of assembly, homotetramer. The cofactor is Mg(2+).

The protein resides in the cytoplasm. The catalysed reaction is beta-D-fructose 1,6-bisphosphate + H2O = beta-D-fructose 6-phosphate + phosphate. It participates in carbohydrate biosynthesis; gluconeogenesis. The polypeptide is Fructose-1,6-bisphosphatase class 1 1 (Salinibacter ruber (strain DSM 13855 / M31)).